A 202-amino-acid chain; its full sequence is Small ribosomal subunit protein uS2 (202 aa).

Belongs to the universal ribosomal protein uS2 family.

The polypeptide is Small ribosomal subunit protein uS2 (rps2) (Pyrococcus abyssi (strain GE5 / Orsay)).